The primary structure comprises 1088 residues: MALSLYYDEDDDENENENKDKPNNDFKNQQQINTSKTTNNNNNINNKNNYNNKFNDDDIFNNDKIITKPRVTTTTTTTKNTSTNSNINKTKFNDDDIFDDEDEDSNSNKTTTTTTTTTTTTDTIITNDYRYQKTVPFSSFCDLMNRIINDTKISNKKNYLEKFMNHYKDEPNNFYQLLRLILPQLDKDRNSYGLKEKTLARLYVELLNISPESVDAMRLLNWKKSTNDEIGGDFGTAVYLSLKNRCNNDNGRIKVSMGDINESLDQLSQPLTDKKTKVSILKKVLRSTTAQEQKWFVRIILKEMKNGLSDNITLKFFHPDAIDHFNITSNLRLVCTNLFYMTQSKQKELKDKQKLEEKENLLKQQQQQQNDLDIYKLEIKLFNPIKPMLANRQSIDNLSMILNSAISATQFVVEKKFDGERIQIHKDGEQVKYFSRNSNDSTGIYGSMFTPIVKECVLAERCILDGELIVWDSISQRFEDFGNLKTLALNKDGISGSGDPLGINYGKQLCFIAFDILFVKDQSVMNLPLMQRLMLLKRCVTIKSKQFEISEQTTVNSISQIISLLESAIINREEGLMLKNLHSLYVPAERKDKWVKIKPEYIDGMGNGADDLDLVIIGGYYGSGLNRRGGTISHFMLGVPFIADSTDTDIDDESTFDKNVIFYSFCKVGSGYTDIQLKSLQKDLDPHWNNFSTSKPPSIIQLAEPFKEKPDVWIDPRVYSKVLQIKASQIVVTDKYKCGYTLRFPRVLKIRDDKGWKDCCSHEEIIDLFTNYSTNLNFKRDHEYGDGSGGKNKKLKKSKKTTNQLLADSGLKVLSIFQDTDTSGIIPTQNIFQGIEICVIKGSSGEYTKSKLEIMIVEMGGSKVQYPSRNTNYVISSKEVVKIQNLIQSGFIDIVSFNWIVDCYNEKRLVPLGPKYMIFSTESTKKRFLLDSDQFGDSYINETTEQSLKDSFNQIDKLKLKKQLSINSTTTTTTTSISKYFSNCWWSLFKEFTFYLDLYQVVGEKSTLIENNNLELSNLNIQFYGGKISIEFNNKITHVVLDSLDLSRITFIKNKINSLSLPIQIVTTNWIQLSINNYSIQPILEILD.

Disordered stretches follow at residues 1–56 (MALS…KFND) and 73–117 (TTTT…TTTT). Low complexity-rich tracts occupy residues 25–53 (DFKNQQQINTSKTTNNNNNINNKNNYNNK) and 73–90 (TTTTTTKNTSTNSNINKT). Positions 95–105 (DDIFDDEDEDS) are enriched in acidic residues. ATP contacts are provided by E414, K416, R421, E467, F514, E574, K579, K596, and K598. K416 functions as the N6-AMP-lysine intermediate in the catalytic mechanism. Position 467 (E467) interacts with Mg(2+). Residue E574 coordinates Mg(2+). 2 consecutive BRCT domains span residues 827-917 (PTQN…PKYM) and 984-1088 (CWWS…EILD).

Belongs to the ATP-dependent DNA ligase family. Mg(2+) is required as a cofactor.

The protein resides in the nucleus. The enzyme catalyses ATP + (deoxyribonucleotide)n-3'-hydroxyl + 5'-phospho-(deoxyribonucleotide)m = (deoxyribonucleotide)n+m + AMP + diphosphate.. DNA ligase involved in DNA non-homologous end joining (NHEJ); required for double-strand break (DSB) repair. This chain is DNA ligase 4 (lig4), found in Dictyostelium discoideum (Social amoeba).